The following is a 542-amino-acid chain: Cytochrome P450 monooxygenase TRI1 (542 aa).

The helical transmembrane segment at leucine 37–leucine 54 threads the bilayer. N-linked (GlcNAc...) asparagine glycans are attached at residues asparagine 167, asparagine 297, and asparagine 428. Cysteine 469 provides a ligand contact to heme.

Belongs to the cytochrome P450 family. Requires heme as cofactor.

It localises to the membrane. The protein operates within sesquiterpene biosynthesis; trichothecene biosynthesis. Cytochrome P450 monooxygenase; part of 2-gene cluster involved in trichothecene C-8 modification that mediates the biosynthesis of T2-toxin. The biosynthesis of trichothecenes begins with the cyclization of farnesyl diphosphate to trichodiene and is catalyzed by the trichodiene synthase TRI5. Trichodiene undergoes a series of oxygenations catalyzed by the cytochrome P450 monooxygenase TRI4. TRI4 controls the addition of four oxygens at C-2, C-3, C-11, and the C-12, C-13-epoxide to form the intermediate isotrichotriol. Isotrichotriol then undergoes a non-enzymatic isomerization and cyclization to form isotrichodermol. During this process, the oxygen at the C-2 position becomes the pyran ring oxygen and the hydroxyl group at C-11 is lost. More complex type A trichothecenes are built by modifying isotrichodermol through a series of paired hydroxylation and acetylation or acylation steps. Isotrichodermol is converted to isotrichodermin by the acetyltransferase TRI101. TRI101 encodes a C-3 transacetylase that acts as a self-protection or resistance factor during biosynthesis and that the presence of a free C-3 hydroxyl group is a key component of Fusarium trichothecene phytotoxicity. A second hydroxyl group is added to C-15 by the trichothecene C-15 hydroxylase TRI11, producing 15-decalonectrin, which is then acetylated by TRI3, producing calonectrin. A third hydroxyl group is added at C-4 by the cytochrome P450 monooxygenase TRI13, converting calonectrin to 3,15-diacetoxyspirpenol, which is subsequently acetylated by the acetyltransferase TRI7. A fourth hydroxyl group is added to C-8 by the cytochrome P450 monooxygenase TRI1, followed by the addition of an isovaleryl moiety by TRI16. Finally, the acetyl group is removed from the C-3 position by the trichothecene C-3 esterase TRI8 to produce T-2 toxin. The sequence is that of Cytochrome P450 monooxygenase TRI1 from Fusarium sporotrichioides.